We begin with the raw amino-acid sequence, 308 residues long: V-type immunoglobulin domain-containing suppressor of T-cell activation (308 aa).

An N-terminal signal peptide occupies residues 1 to 32 (MGVPAVPEASSPRWGTLLLAIFLAASRGLVAA). In terms of domain architecture, Ig-like V-type spans 33-167 (FKVTTPYSLY…RFYGSMELQV (135 aa)). Over 33 to 191 (FKVTTPYSLY…EQDSDSITAA (159 aa)) the chain is Extracellular. 3 N-linked (GlcNAc...) asparagine glycosylation sites follow: N49, N91, and N127. C54 and C145 form a disulfide bridge. The chain crosses the membrane as a helical span at residues 192–212 (ALATGACIVGILCLPLILLLV). The Cytoplasmic portion of the chain corresponds to 213-308 (YKQRQVASHR…VPDSPNSEAI (96 aa)). The tract at residues 230–308 (MDSNTQGIEN…VPDSPNSEAI (79 aa)) is disordered. S232 is modified (phosphoserine).

At the cell surface, may be cleaved by MMP14. Post-translationally, N-glycosylated. As to expression, expressed in spleen, thymus, bone marrow, lymph node, and in T-cells within the lamina propria of the small intestine. Detected on CD4+ and CD8+ T-cells, bone marrow-derived dendritic cells (BMDCs), peritoneal macrophages, neutrophils, and natural killer (NK) cells. In spleen and lymph nodes, highly expressed on CD4+ T-cell populations, and at lower levels on CD8+ T-cells. In thymus, has low expression on CD4+ cells and CD8+ cells, and not detected on CD4+CD8+ cells. Expressed in splenic and peritoneal CD11b cells. Not detected in most B cells and NK cells (at protein level). Also detected at lower levels in non-hematopoeitic tissues such as heart, brain, lung, kidney, muscle, ovary, and testis.

It is found in the cell membrane. Immunoregulatory receptor which inhibits the T-cell response. May promote differentiation of embryonic stem cells, by inhibiting BMP4 signaling. May stimulate MMP14-mediated MMP2 activation. The chain is V-type immunoglobulin domain-containing suppressor of T-cell activation from Mus musculus (Mouse).